The following is a 904-amino-acid chain: Translation initiation factor IF-2 (904 aa).

Disordered stretches follow at residues 102–122, 134–252, and 267–316; these read TYVKSENEGGGRAAPMTPDEE, RQRN…MVAG, and HLSA…ERPT. Basic and acidic residues predominate over residues 134 to 177; the sequence is RQRNLEEQQRLAESDRVRDEAIQRKREEEQAAKDRAEAERKAAE. Residues 178–230 show a composition bias toward low complexity; sequence EAAAAASAPAPVADAPKPSAAAPAARLPSSPSSAPRAARPAGASPASRPAAPA. A tr-type G domain is found at 403–572; sequence SRPPVVTIMG…SLQAEVLELK (170 aa). The tract at residues 412 to 419 is G1; that stretch reads GHVDHGKT. 412–419 lines the GTP pocket; the sequence is GHVDHGKT. The tract at residues 437-441 is G2; the sequence is GITQH. The G3 stretch occupies residues 458–461; that stretch reads DTPG. GTP contacts are provided by residues 458–462 and 512–515; these read DTPGH and NKID. Residues 512 to 515 are G4; that stretch reads NKID. Residues 548–550 form a G5 region; it reads SAK.

Belongs to the TRAFAC class translation factor GTPase superfamily. Classic translation factor GTPase family. IF-2 subfamily.

Its subcellular location is the cytoplasm. One of the essential components for the initiation of protein synthesis. Protects formylmethionyl-tRNA from spontaneous hydrolysis and promotes its binding to the 30S ribosomal subunits. Also involved in the hydrolysis of GTP during the formation of the 70S ribosomal complex. The polypeptide is Translation initiation factor IF-2 (Xanthomonas axonopodis pv. citri (strain 306)).